The sequence spans 180 residues: Ribulose bisphosphate carboxylase small subunit, chloroplastic (180 aa).

The transit peptide at 1–57 (MVSSMMVSSAATFTRASPAQSSMVAPFTGLKSASAFPVTRKPNADLSHLPSNGGRVQ) directs the protein to the chloroplast.

Belongs to the RuBisCO small chain family. As to quaternary structure, heterohexadecamer of 8 large and 8 small subunits.

Its subcellular location is the plastid. It localises to the chloroplast. Its function is as follows. RuBisCO catalyzes two reactions: the carboxylation of D-ribulose 1,5-bisphosphate, the primary event in carbon dioxide fixation, as well as the oxidative fragmentation of the pentose substrate. Both reactions occur simultaneously and in competition at the same active site. Although the small subunit is not catalytic it is essential for maximal activity. The chain is Ribulose bisphosphate carboxylase small subunit, chloroplastic from Musa acuminata (Banana).